Consider the following 423-residue polypeptide: NADH-quinone oxidoreductase subunit F (423 aa).

Residue 54 to 63 coordinates NAD(+); that stretch reads GRGGAGFSTG. Residue 166 to 213 participates in FMN binding; the sequence is GAGAYICGEETALLESLEGKKGMPRLKPPFPAGFGLYGCPTTINNVES. [4Fe-4S] cluster-binding residues include Cys-344, Cys-347, Cys-350, and Cys-390.

It belongs to the complex I 51 kDa subunit family. FMN is required as a cofactor. It depends on [4Fe-4S] cluster as a cofactor.

The enzyme catalyses a quinone + NADH + 5 H(+)(in) = a quinol + NAD(+) + 4 H(+)(out). Its function is as follows. NDH-1 shuttles electrons from NADH, via FMN and iron-sulfur (Fe-S) centers, to quinones in the respiratory chain. Couples the redox reaction to proton translocation (for every two electrons transferred, four hydrogen ions are translocated across the cytoplasmic membrane), and thus conserves the redox energy in a proton gradient. The protein is NADH-quinone oxidoreductase subunit F (nuoF) of Rickettsia akari (strain Hartford).